Consider the following 328-residue polypeptide: uncharacterized protein (328 aa).

Belongs to the Gfo/Idh/MocA family.

This is an uncharacterized protein from Escherichia coli (strain K12).